An 89-amino-acid polypeptide reads, in one-letter code: Protein S100-A8 (89 aa).

EF-hand domains lie at 12–47 (LIDV…KFMK) and 46–81 (MKKK…VGLE). Zn(2+) contacts are provided by His-17 and His-27. Asp-33 lines the Ca(2+) pocket. Cys-42 bears the S-nitrosocysteine mark. The Ca(2+) site is built by Asp-59, Asn-61, Asp-63, and Glu-70. His-83 lines the Zn(2+) pocket.

Belongs to the S-100 family. In terms of assembly, homodimer. Preferentially exists as a heterodimer or heterotetramer with S100A9 known as calprotectin (S100A8/A9). S100A8 interacts with AGER, ATP2A2 and with the heterodimeric complex formed by TLR4 and LY96. Calprotectin (S100A8/9) interacts with CEACAM3 and tubulin filaments in a calcium-dependent manner. Heterotetrameric calprotectin (S100A8/A9) interacts with ANXA6 and associates with tubulin filaments in activated monocytes. S100A8 and calprotectin (S100A8/9) interact with NCF2/P67PHOX, RAC1 and RAC2. Calprotectin (S100A8/9) interacts with CYBA and CYBB. Calprotectin (S100A8/9) interacts with NOS2 to form the iNOS-S100A8/A9 transnitrosylase complex. Calprotectin (S100A8/9) interacts with CD69. Found essentially in phagocytic cells.

It is found in the secreted. Its subcellular location is the cytoplasm. The protein resides in the cytoskeleton. It localises to the cell membrane. In terms of biological role, S100A8 is a calcium- and zinc-binding protein which plays a prominent role in the regulation of inflammatory processes and immune response. It can induce neutrophil chemotaxis and adhesion. Predominantly found as calprotectin (S100A8/A9) which has a wide plethora of intra- and extracellular functions. The intracellular functions include: facilitating leukocyte arachidonic acid trafficking and metabolism, modulation of the tubulin-dependent cytoskeleton during migration of phagocytes and activation of the neutrophilic NADPH-oxidase. Also participates in regulatory T-cell differentiation together with CD69. Activates NADPH-oxidase by facilitating the enzyme complex assembly at the cell membrane, transferring arachidonic acid, an essential cofactor, to the enzyme complex and S100A8 contributes to the enzyme assembly by directly binding to NCF2/P67PHOX. The extracellular functions involve pro-inflammatory, antimicrobial, oxidant-scavenging and apoptosis-inducing activities. Its pro-inflammatory activity includes recruitment of leukocytes, promotion of cytokine and chemokine production, and regulation of leukocyte adhesion and migration. Acts as an alarmin or a danger associated molecular pattern (DAMP) molecule and stimulates innate immune cells via binding to pattern recognition receptors such as Toll-like receptor 4 (TLR4) and receptor for advanced glycation endproducts (AGER). Binding to TLR4 and AGER activates the MAP-kinase and NF-kappa-B signaling pathways resulting in the amplification of the pro-inflammatory cascade. Has antimicrobial activity towards bacteria and fungi and exerts its antimicrobial activity probably via chelation of Zn(2+) which is essential for microbial growth. Can induce cell death via autophagy and apoptosis and this occurs through the cross-talk of mitochondria and lysosomes via reactive oxygen species (ROS) and the process involves BNIP3. Can regulate neutrophil number and apoptosis by an anti-apoptotic effect; regulates cell survival via ITGAM/ITGB and TLR4 and a signaling mechanism involving MEK-ERK. Its role as an oxidant scavenger has a protective role in preventing exaggerated tissue damage by scavenging oxidants. The iNOS-S100A8/A9 transnitrosylase complex is proposed to direct selective inflammatory stimulus-dependent S-nitrosylation of multiple targets such as GAPDH, ANXA5, EZR, MSN and VIM by recognizing a [IL]-x-C-x-x-[DE] motif; S100A8 seems to contribute to S-nitrosylation site selectivity. This Bos taurus (Bovine) protein is Protein S100-A8 (S100A8).